The sequence spans 321 residues: Probable pectate lyase A (321 aa).

Residues methionine 1 to alanine 18 form the signal peptide. N-linked (GlcNAc...) asparagine glycosylation occurs at asparagine 93. Positions 134, 163, and 167 each coordinate Ca(2+). Arginine 220 is an active-site residue. N-linked (GlcNAc...) asparagine glycosylation occurs at asparagine 238.

This sequence belongs to the polysaccharide lyase 1 family. Ca(2+) is required as a cofactor.

The protein resides in the secreted. It catalyses the reaction Eliminative cleavage of (1-&gt;4)-alpha-D-galacturonan to give oligosaccharides with 4-deoxy-alpha-D-galact-4-enuronosyl groups at their non-reducing ends.. In terms of biological role, pectinolytic enzyme consist of four classes of enzymes: pectin lyase, polygalacturonase, pectin methylesterase and rhamnogalacturonase. Among pectinolytic enzymes, pectin lyase is the most important in depolymerization of pectin, since it cleaves internal glycosidic bonds of highly methylated pectins. Favors pectate, the anion, over pectin, the methyl ester. The sequence is that of Probable pectate lyase A (plyA) from Aspergillus fumigatus (strain ATCC MYA-4609 / CBS 101355 / FGSC A1100 / Af293) (Neosartorya fumigata).